Consider the following 1845-residue polypeptide: Helicase swr-1 (1845 aa).

Residues 1-13 (MTTMMTDSGTASD) show a composition bias toward polar residues. The segment at 1-329 (MTTMMTDSGT…GASRATPRIK (329 aa)) is disordered. Low complexity predominate over residues 24–38 (NDTTTTTTTTTTPGD). The span at 63–84 (SKSYSSTHHVPAIDNTSTTNAN) shows a compositional bias: polar residues. Positions 98 to 108 (SPLSSISSPLS) are enriched in low complexity. The segment covering 168-180 (PKPESPPWKKFEA) has biased composition (basic and acidic residues). Residues 216 to 243 (AIQTSPVSNKSSASTSRKPAPASSSNSK) are compositionally biased toward polar residues. 2 stretches are compositionally biased toward pro residues: residues 248 to 258 (KMPPPPPPPKA) and 283 to 292 (PRRPATPPKP). The HSA domain maps to 418–493 (PEAEEEPPRQ…EMEASKAKWR (76 aa)). 2 disordered regions span residues 539 to 713 (QKLQ…LFFG) and 749 to 935 (ELQV…TVKT). The span at 549–565 (DGDEITDEDEDEDDEDL) shows a compositional bias: acidic residues. Basic and acidic residues predominate over residues 574–585 (GDEKESDEHSDQ). Composition is skewed to acidic residues over residues 586-608 (GSDEMSDENDEDEDEDNMSSSED) and 663-704 (NDDD…DDEP). Polar residues-rich tracts occupy residues 762 to 777 (TNGTHTNEQLASSQTE) and 815 to 834 (TNDSSLKYPNEIVQSENQTL). Low complexity predominate over residues 888–897 (SQSQTQSPKT). The segment covering 898–909 (TDTKPTDVDTPH) has biased composition (basic and acidic residues). A compositionally biased stretch (polar residues) spans 922–933 (RQSSPQPTTPTV). One can recognise a Helicase ATP-binding domain in the interval 957–1122 (AGLYANNTNG…WSLLYFLAPP (166 aa)). 970–977 (DEMGLGKT) lines the ATP pocket. Positions 1073–1076 (DEAH) match the DEAH box motif. Positions 1510-1660 (ALDKLLRKLQ…DVVIQEGEFT (151 aa)) constitute a Helicase C-terminal domain. Disordered regions lie at residues 1702–1724 (TTGAGGYDGTADGGGGASQPPVR), 1751–1783 (QDEADFGEAGSTRPGTPGDGLADLDGQLLGGEE), and 1816–1845 (LEGTPLELPRDRKKGRDRNRNRKGKDSRKR). The segment covering 1704–1718 (GAGGYDGTADGGGGA) has biased composition (gly residues). Low complexity predominate over residues 1769–1781 (DGLADLDGQLLGG). Over residues 1826–1845 (DRKKGRDRNRNRKGKDSRKR) the composition is skewed to basic residues.

This sequence belongs to the SNF2/RAD54 helicase family. SWR1 subfamily. Component of the SWR1 chromatin-remodeling complex.

It localises to the nucleus. It carries out the reaction ATP + H2O = ADP + phosphate + H(+). Functionally, catalytic component of the SWR1 complex which mediates the ATP-dependent exchange of histone H2A for the H2A variant H2A.Z leading to transcriptional regulation of selected genes by chromatin remodeling. The chain is Helicase swr-1 (crf1-1) from Neurospora crassa (strain ATCC 24698 / 74-OR23-1A / CBS 708.71 / DSM 1257 / FGSC 987).